Consider the following 59-residue polypeptide: Three-finger toxin MS1 (59 aa).

Disulfide bonds link C3–C22, C17–C39, C41–C52, and C53–C58.

Belongs to the three-finger toxin family. Short-chain subfamily. Type I alpha-neurotoxin sub-subfamily. As to expression, expressed by the venom gland.

The protein localises to the secreted. Functionally, produces peripheral paralysis by blocking neuromuscular transmission at the postsynaptic site. Binds to and inhibits the endogenous nicotinic acetylcholine receptors (nAChR) in human rhabdomyosarcoma TE 671 cell line with an IC(50) of 48.2 mM. This neurotoxin is lethal to mice by intraperitoneal injection and to zebrafish by injection at the back of the dorsolateral region. In Micrurus surinamensis (Surinam coral snake), this protein is Three-finger toxin MS1.